The primary structure comprises 342 residues: S-adenosylmethionine:tRNA ribosyltransferase-isomerase (342 aa).

It belongs to the QueA family. In terms of assembly, monomer.

The protein localises to the cytoplasm. The enzyme catalyses 7-aminomethyl-7-carbaguanosine(34) in tRNA + S-adenosyl-L-methionine = epoxyqueuosine(34) in tRNA + adenine + L-methionine + 2 H(+). Its pathway is tRNA modification; tRNA-queuosine biosynthesis. Its function is as follows. Transfers and isomerizes the ribose moiety from AdoMet to the 7-aminomethyl group of 7-deazaguanine (preQ1-tRNA) to give epoxyqueuosine (oQ-tRNA). This is S-adenosylmethionine:tRNA ribosyltransferase-isomerase from Geobacillus kaustophilus (strain HTA426).